Consider the following 292-residue polypeptide: NAD kinase (292 aa).

The active-site Proton acceptor is the Asp-73. NAD(+)-binding positions include 73–74, 147–148, His-158, Arg-175, Asp-177, 188–193, and Gln-247; these read DG, NE, and TAYSLS.

Belongs to the NAD kinase family. The cofactor is a divalent metal cation.

The protein resides in the cytoplasm. It catalyses the reaction NAD(+) + ATP = ADP + NADP(+) + H(+). Involved in the regulation of the intracellular balance of NAD and NADP, and is a key enzyme in the biosynthesis of NADP. Catalyzes specifically the phosphorylation on 2'-hydroxyl of the adenosine moiety of NAD to yield NADP. In Shigella dysenteriae serotype 1 (strain Sd197), this protein is NAD kinase.